Consider the following 416-residue polypeptide: Tyrosine--tRNA ligase (416 aa).

Tyr41 provides a ligand contact to L-tyrosine. Positions 46–55 (ATASSLHAGH) match the 'HIGH' region motif. L-tyrosine contacts are provided by Tyr175 and Gln179. Positions 235–239 (KMGKT) match the 'KMSKS' region motif. Lys238 contributes to the ATP binding site. In terms of domain architecture, S4 RNA-binding spans 349–416 (LPVAKAFVDA…KKKHVLLKPV (68 aa)).

The protein belongs to the class-I aminoacyl-tRNA synthetase family. TyrS type 1 subfamily. As to quaternary structure, homodimer.

Its subcellular location is the cytoplasm. It catalyses the reaction tRNA(Tyr) + L-tyrosine + ATP = L-tyrosyl-tRNA(Tyr) + AMP + diphosphate + H(+). Catalyzes the attachment of tyrosine to tRNA(Tyr) in a two-step reaction: tyrosine is first activated by ATP to form Tyr-AMP and then transferred to the acceptor end of tRNA(Tyr). The sequence is that of Tyrosine--tRNA ligase from Xanthobacter autotrophicus (strain ATCC BAA-1158 / Py2).